The sequence spans 294 residues: tRNA dimethylallyltransferase (294 aa).

10-17 (GPTAVGKT) is an ATP binding site. Position 12-17 (12-17 (TAVGKT)) interacts with substrate. Positions 35–38 (DSQQ) are interaction with substrate tRNA.

Belongs to the IPP transferase family. Monomer. The cofactor is Mg(2+).

The catalysed reaction is adenosine(37) in tRNA + dimethylallyl diphosphate = N(6)-dimethylallyladenosine(37) in tRNA + diphosphate. Catalyzes the transfer of a dimethylallyl group onto the adenine at position 37 in tRNAs that read codons beginning with uridine, leading to the formation of N6-(dimethylallyl)adenosine (i(6)A). The polypeptide is tRNA dimethylallyltransferase (Streptococcus pneumoniae serotype 2 (strain D39 / NCTC 7466)).